Here is a 504-residue protein sequence, read N- to C-terminus: Kinesin light chain 3 (504 aa).

The stretch at 90–150 (ALSAHVGALE…EEEKRHLEFL (61 aa)) forms a coiled coil. The disordered stretch occupies residues 153 to 197 (LRQYDPPAESQQSESPPRRDSLASLFPSEEEERKGPEAAGAAAAQ). Residues 158–167 (PPAESQQSES) are compositionally biased toward low complexity. Position 173 is a phosphoserine (Ser-173). TPR repeat units follow at residues 207–240 (LRTLHNLVIQYAGQGRYEVAVPLCRQALEDLERS), 249–282 (ATMLNILALVYRDQNKYKEATDLLHDALQIREQT), 291–324 (AATLNNLAVLYGKRGRYREAEPLCQRALEIREKV), 333–366 (AKQLNNLALLCQNQGKFEDVERHYARALSIYEAL), and 375–408 (AKTKNNLASAYLKQNKYQQAEELYKEILHKEDLP). Residues 411–438 (LGAPNTGTAGDAEQALRRSSSLSKIRES) are disordered. Ser-466 carries the phosphoserine modification. A Phosphothreonine modification is found at Thr-498. At Ser-502 the chain carries Phosphoserine.

Belongs to the kinesin light chain family. Oligomer composed of two heavy chains and two light chains. Associates with microtubulin in an ATP-dependent manner. Interacts with KIF5C. Interacts with ODF1. Interacts with LRGUK. Interacts with VDAC2.

Its subcellular location is the cytoplasm. The protein resides in the cytoskeleton. It localises to the mitochondrion. In terms of biological role, kinesin is a microtubule-associated force-producing protein that may play a role in organelle transport. Plays a role during spermiogenesis in the development of the sperm tail midpiece and in the normal function of spermatozoa. May play a role in the formation of the mitochondrial sheath formation in the developing spermatid midpiece. This is Kinesin light chain 3 (KLC3) from Pongo abelii (Sumatran orangutan).